Consider the following 393-residue polypeptide: Serpin-Z4 (393 aa).

Residues 342-366 (GTEAAAVSVASMTKDMLLMGDFVAD) form an RCL region.

The protein belongs to the serpin family.

Functionally, probable serine protease inhibitor. The chain is Serpin-Z4 from Arabidopsis thaliana (Mouse-ear cress).